A 365-amino-acid chain; its full sequence is Forkhead box protein H1 (365 aa).

Residues 1–29 are disordered; it reads MGPCSGSRLGPPEAESPSQPPKRRKKRYL. A DNA-binding region (fork-head) is located at residues 32 to 128; sequence DKPPYTYLAM…ALRLQNTALC (97 aa). The segment at 151–215 is disordered; sequence GRPYRPPSPP…TPPLPSSERP (65 aa). Positions 154–164 are enriched in pro residues; it reads YRPPSPPPPPS. An SMAD-interaction domain (SID) region spans residues 273–354; that stretch reads LWGQLPTSYL…VSHPRDLAAP (82 aa). The Fast/FoxH1 motif 1 (FM1) signature appears at 277 to 281; the sequence is LPTSY. Residues 287–293 carry the Fast/FoxH1 motif 2 (FM2) motif; the sequence is PNVVMPL. The SMAD interaction motif (SIM) motif lies at 327–348; it reads LDALFQGVPPNKSIYDVWVSHP.

Interacts with the MH2 domains of SMAD2 and SMAD3. In terms of tissue distribution, ubiquitous.

It localises to the nucleus. Transcriptional activator. Recognizes and binds to the DNA sequence 5'-TGT[GT][GT]ATT-3'. Required for induction of the goosecoid (GSC) promoter by TGF-beta or activin signaling. Forms a transcriptionally active complex containing FOXH1/SMAD2/SMAD4 on a site on the GSC promoter called TARE (TGF-beta/activin response element). The polypeptide is Forkhead box protein H1 (FOXH1) (Homo sapiens (Human)).